We begin with the raw amino-acid sequence, 880 residues long: Probable dipeptidyl-aminopeptidase B (880 aa).

The segment covering 1–26 has biased composition (basic and acidic residues); sequence MPRQRAPKEEEAELLTKQERSARSSE. Residues 1–71 form a disordered region; sequence MPRQRAPKEE…KYTDEDDEAQ (71 aa). Residues 1–93 lie on the Cytoplasmic side of the membrane; it reads MPRQRAPKEE…PISVDKKTRR (93 aa). A compositionally biased stretch (low complexity) spans 30–40; the sequence is DTSISSISTTS. Residues 94–114 form a helical; Signal-anchor for type II membrane protein membrane-spanning segment; that stretch reads WLWIVGIACVTGWALALVFFL. The Vacuolar portion of the chain corresponds to 115–880; the sequence is MSGSYKHVST…AQVDARMERR (766 aa). Asparagine 533 carries N-linked (GlcNAc...) asparagine glycosylation. The active-site Charge relay system is serine 724. An N-linked (GlcNAc...) asparagine glycan is attached at asparagine 778. Residues aspartate 801 and histidine 834 each act as charge relay system in the active site.

The protein belongs to the peptidase S9B family.

It is found in the vacuole membrane. The catalysed reaction is Release of an N-terminal dipeptide, Xaa-Yaa-|-Zaa-, from a polypeptide, preferentially when Yaa is Pro, provided Zaa is neither Pro nor hydroxyproline.. Functionally, type IV dipeptidyl-peptidase which removes N-terminal dipeptides sequentially from polypeptides having unsubstituted N-termini provided that the penultimate residue is proline. The polypeptide is Probable dipeptidyl-aminopeptidase B (dapB) (Pyrenophora tritici-repentis (strain Pt-1C-BFP) (Wheat tan spot fungus)).